We begin with the raw amino-acid sequence, 49 residues long: Large ribosomal subunit protein bL33 (49 aa).

The protein belongs to the bacterial ribosomal protein bL33 family.

The chain is Large ribosomal subunit protein bL33 from Lactobacillus acidophilus (strain ATCC 700396 / NCK56 / N2 / NCFM).